We begin with the raw amino-acid sequence, 136 residues long: uncharacterized protein (136 aa).

A disordered region spans residues 74-97; that stretch reads RADPGRKGRTQPLPTQGSARRFLH.

This is an uncharacterized protein from Saccharomyces cerevisiae (strain ATCC 204508 / S288c) (Baker's yeast).